The chain runs to 163 residues: Regulator of chromosome segregation (163 aa).

In terms of assembly, interacts with CpsD and ParB.

Its subcellular location is the cytoplasm. It is found in the nucleoid. The protein localises to the cell membrane. Functionally, required for cell division and chromosome segregation. Binds to DNA and is involved in segregating the origin of replication (oriC) region to new daughter cells. When the nucleoid is not properly segregated, involved in blocking the cell division to protect the nucleoid against premature truncation by the newly forming septum, a function which is dependent on CpsD and its autophosphorylation level. The polypeptide is Regulator of chromosome segregation (Streptococcus pneumoniae serotype 2 (strain D39 / NCTC 7466)).